The chain runs to 160 residues: Interleukin-36 alpha (160 aa).

A propeptide spanning residues 1-7 is cleaved from the precursor; it reads MNKEKEL. The residue at position 98 (tyrosine 98) is a 3'-nitrotyrosine.

This sequence belongs to the IL-1 family. As to quaternary structure, interacts with TMED10; the interaction mediates the translocation from the cytoplasm into the ERGIC (endoplasmic reticulum-Golgi intermediate compartment) and thereby secretion. Post-translationally, N-terminal truncation leads to a dramatic enhancement of its activity (&gt;1000-fold). In terms of tissue distribution, highly expressed in embryonic tissue and in tissues containing epithelial cells. Elevated expression levels are detected in chronic kidney disease; expressed inepithelia from the distal convoluted tubules (DCTs) to the cortical collecting ducts (CCDs) in single nephrons (at protein level).

It is found in the cytoplasm. The protein resides in the secreted. Its function is as follows. Cytokine that binds to and signals through the IL1RL2/IL-36R receptor which in turn activates NF-kappa-B and MAPK signaling pathways in target cells linked to a pro-inflammatory response. Part of the IL-36 signaling system that is thought to be present in epithelial barriers and to take part in local inflammatory response; similar to the IL-1 system with which it shares the coreceptor IL1RAP. Seems to be involved in skin inflammatory response by acting on keratinocytes, dendritic cells and indirectly on T-cells to drive tissue infiltration, cell maturation and cell proliferation. Induces the production of pro-inflammatory cytokines, including IL-12, Il-1 beta, IL-6, TNF-alpha and IL-23 in bone marrow-derived dendritic cells (BMDCs). Involved in dendritic cell maturation by stimulating the surface expression of CD80, CD86 and MHC class II. Induces the production of IFN-gamma, IL-4 and IL-17 by cultured CD4(+) T-cells and splenocytes. May play a role in pro-inflammatory effects in the lung: induces the expression of CXCL1 and CXCL2 in the lung, and the expression of TNF-alpha, IL-36c, IL-1A, IL-1B, CXCL1 and CXCL2 in isolated splenic CD11c(+) alveolar macrophages. May be involved in T-cell maturation by stimulating the surface expression of CD40 and modestly CD80 and CD86 in splenic CD11c(+) cells. May be involved in CD4(+) T-cell proliferation. Induces NF-kappa B activation in macrophages. This is Interleukin-36 alpha from Mus musculus (Mouse).